A 95-amino-acid polypeptide reads, in one-letter code: Co-chaperonin GroES (95 aa).

It belongs to the GroES chaperonin family. In terms of assembly, heptamer of 7 subunits arranged in a ring. Interacts with the chaperonin GroEL.

Its subcellular location is the cytoplasm. Its function is as follows. Together with the chaperonin GroEL, plays an essential role in assisting protein folding. The GroEL-GroES system forms a nano-cage that allows encapsulation of the non-native substrate proteins and provides a physical environment optimized to promote and accelerate protein folding. GroES binds to the apical surface of the GroEL ring, thereby capping the opening of the GroEL channel. This chain is Co-chaperonin GroES, found in Stenotrophomonas maltophilia (strain K279a).